Here is a 987-residue protein sequence, read N- to C-terminus: Eukaryotic translation initiation factor 3 subunit A (987 aa).

Residues 93–122 adopt a coiled-coil conformation; that stretch reads LHLATDKAEQARSQADALEEALDVDDLEAD. Positions 316 to 513 constitute a PCI domain; sequence LQLIASSVVL…GVVIFGNLGI (198 aa). 2 coiled-coil regions span residues 556–742 and 797–858; these read TVEK…EKNR and LKIE…REEL. Residues 808–859 show a composition bias toward basic and acidic residues; sequence QEEEEARKQEEAERLKKVEAERKANLDKAFEKQRQREIELEEKSRREREELL. The interval 808 to 987 is disordered; that stretch reads QEEEEARKQE…GSSRPRPTQR (180 aa). The segment covering 872–894 has biased composition (low complexity); the sequence is PTVTPVGTTAPAAAAAAAGAPAA. 2 stretches are compositionally biased toward polar residues: residues 905-916 and 976-987; these read TEVSGPSAPTSS and TFGSSRPRPTQR.

This sequence belongs to the eIF-3 subunit A family. In terms of assembly, component of the eukaryotic translation initiation factor 3 (eIF-3) complex. Binds to the translation initiation factor TIF3H1.

The protein resides in the cytoplasm. In terms of biological role, RNA-binding component of the eukaryotic translation initiation factor 3 (eIF-3) complex, which is involved in protein synthesis of a specialized repertoire of mRNAs and, together with other initiation factors, stimulates binding of mRNA and methionyl-tRNAi to the 40S ribosome. The eIF-3 complex specifically targets and initiates translation of a subset of mRNAs involved in cell proliferation. The protein is Eukaryotic translation initiation factor 3 subunit A (TIF3A1) of Arabidopsis thaliana (Mouse-ear cress).